Reading from the N-terminus, the 186-residue chain is Ribosome-recycling factor (186 aa).

The protein belongs to the RRF family.

It localises to the cytoplasm. Functionally, responsible for the release of ribosomes from messenger RNA at the termination of protein biosynthesis. May increase the efficiency of translation by recycling ribosomes from one round of translation to another. This is Ribosome-recycling factor from Bordetella petrii (strain ATCC BAA-461 / DSM 12804 / CCUG 43448).